The primary structure comprises 410 residues: Arginine deiminase (410 aa).

Catalysis depends on C400, which acts as the Amidino-cysteine intermediate.

Belongs to the arginine deiminase family.

It localises to the cytoplasm. The enzyme catalyses L-arginine + H2O = L-citrulline + NH4(+). It participates in amino-acid degradation; L-arginine degradation via ADI pathway; carbamoyl phosphate from L-arginine: step 1/2. In Levilactobacillus brevis (strain ATCC 367 / BCRC 12310 / CIP 105137 / JCM 1170 / LMG 11437 / NCIMB 947 / NCTC 947) (Lactobacillus brevis), this protein is Arginine deiminase.